Consider the following 1041-residue polypeptide: Probable rhamnogalacturonate lyase C (1041 aa).

Residues 1 to 21 (MFASTLRKTFVFLGLATYSAA) form the signal peptide. Asn28, Asn94, Asn116, Asn142, Asn231, Asn283, Asn528, and Asn634 each carry an N-linked (GlcNAc...) asparagine glycan. Residues 703-728 (ISRPCPRKGGTRRRKKERKKEGKKQG) are disordered. Basic residues predominate over residues 707-720 (CPRKGGTRRRKKER). The N-linked (GlcNAc...) asparagine glycan is linked to Asn864.

This sequence belongs to the polysaccharide lyase 4 family.

It is found in the secreted. The enzyme catalyses Endotype eliminative cleavage of L-alpha-rhamnopyranosyl-(1-&gt;4)-alpha-D-galactopyranosyluronic acid bonds of rhamnogalacturonan I domains in ramified hairy regions of pectin leaving L-rhamnopyranose at the reducing end and 4-deoxy-4,5-unsaturated D-galactopyranosyluronic acid at the non-reducing end.. Its function is as follows. Pectinolytic enzymes consist of four classes of enzymes: pectin lyase, polygalacturonase, pectin methylesterase and rhamnogalacturonase. Degrades the rhamnogalacturonan I (RG-I) backbone of pectin. This chain is Probable rhamnogalacturonate lyase C (rglC), found in Emericella nidulans (strain FGSC A4 / ATCC 38163 / CBS 112.46 / NRRL 194 / M139) (Aspergillus nidulans).